The following is a 382-amino-acid chain: DNA replication and repair protein RecF (382 aa).

Residue 30-37 coordinates ATP; it reads GPNGHGKS.

It belongs to the RecF family.

The protein resides in the cytoplasm. Functionally, the RecF protein is involved in DNA metabolism; it is required for DNA replication and normal SOS inducibility. RecF binds preferentially to single-stranded, linear DNA. It also seems to bind ATP. This Magnetococcus marinus (strain ATCC BAA-1437 / JCM 17883 / MC-1) protein is DNA replication and repair protein RecF.